The primary structure comprises 252 residues: NAD-dependent protein deacetylase (252 aa).

The region spanning 1-248 is the Deacetylase sirtuin-type domain; it reads MYLVEEAKKV…PEVISHIQSL (248 aa). NAD(+) contacts are provided by Ala-26, Thr-30, Phe-37, Arg-38, Gln-102, Val-104, Asp-105, and His-120. Phe-37 lines the nicotinamide pocket. Nicotinamide is bound by residues Val-104 and Asp-105. The active-site Proton acceptor is His-120. Residues Cys-128, Cys-131, Cys-153, and Cys-155 each contribute to the Zn(2+) site. Residues Ser-191, Ser-192, Asn-216, and Ile-234 each contribute to the NAD(+) site.

Belongs to the sirtuin family. Class U subfamily. Requires Zn(2+) as cofactor.

It is found in the cytoplasm. It catalyses the reaction N(6)-acetyl-L-lysyl-[protein] + NAD(+) + H2O = 2''-O-acetyl-ADP-D-ribose + nicotinamide + L-lysyl-[protein]. NAD-dependent protein deacetylase which modulates the activities of several enzymes which are inactive in their acetylated form. Deacetylates the N-terminal lysine residue of Alba, the major archaeal chromatin protein and that, in turn, increases Alba's DNA binding affinity, thereby repressing transcription. In Sulfolobus acidocaldarius (strain ATCC 33909 / DSM 639 / JCM 8929 / NBRC 15157 / NCIMB 11770), this protein is NAD-dependent protein deacetylase.